A 144-amino-acid chain; its full sequence is Large ribosomal subunit protein uL15 (144 aa).

Residues 24–52 form a disordered region; that stretch reads GSGLGKTAGRGHKGLKSRSGGSVRPGFEG.

Belongs to the universal ribosomal protein uL15 family. In terms of assembly, part of the 50S ribosomal subunit.

In terms of biological role, binds to the 23S rRNA. This chain is Large ribosomal subunit protein uL15, found in Cellvibrio japonicus (strain Ueda107) (Pseudomonas fluorescens subsp. cellulosa).